The following is a 430-amino-acid chain: Protein IQ-DOMAIN 3 (430 aa).

A disordered region spans residues 1-36 (MGKSWFSAVKKALSPEPKQKKEQKPHKSKKWFGKSK). Positions 9-16 (VKKALSPE) match the Nuclear localization signal 1 motif. A compositionally biased stretch (basic residues) spans 23–35 (QKPHKSKKWFGKS). Positions 107–135 (EEIAAIKIQTAFRGYMARRALRALRGLVR) constitute an IQ domain. A coiled-coil region spans residues 170–224 (RLRLSEDKQALTRQLQQKHNKDFDKTGENWNDSTLSREKVEANMLNKQVATMRRE). The interval 213–231 (MLNKQVATMRREKALAYAF) is calmodulin-binding. Disordered regions lie at residues 271-368 (ENHS…SQSV) and 385-430 (SNLS…TNLA). Over residues 286 to 295 (ARSVASRAMS) the composition is skewed to low complexity. The span at 326-340 (SEDSNSIVSFQSEQP) shows a compositional bias: polar residues. Residues 396 to 403 (AKKRLSFS) carry the Nuclear localization signal 2 motif.

It belongs to the IQD family. As to quaternary structure, binds to multiple calmodulin (CaM) in the presence of Ca(2+) and CaM-like proteins.

It is found in the nucleus. Its subcellular location is the nucleolus. The protein resides in the cytoplasm. The protein localises to the cytoskeleton. Functionally, may be involved in cooperative interactions with calmodulins or calmodulin-like proteins. Recruits calmodulin proteins to microtubules, thus being a potential scaffold in cellular signaling and trafficking. May associate with nucleic acids and regulate gene expression at the transcriptional or post-transcriptional level. The polypeptide is Protein IQ-DOMAIN 3 (Arabidopsis thaliana (Mouse-ear cress)).